A 188-amino-acid chain; its full sequence is Adenine phosphoribosyltransferase (188 aa).

Belongs to the purine/pyrimidine phosphoribosyltransferase family. As to quaternary structure, homodimer.

It is found in the cytoplasm. It carries out the reaction AMP + diphosphate = 5-phospho-alpha-D-ribose 1-diphosphate + adenine. The protein operates within purine metabolism; AMP biosynthesis via salvage pathway; AMP from adenine: step 1/1. Its function is as follows. Catalyzes a salvage reaction resulting in the formation of AMP, that is energically less costly than de novo synthesis. The sequence is that of Adenine phosphoribosyltransferase from Burkholderia multivorans (strain ATCC 17616 / 249).